Here is a 191-residue protein sequence, read N- to C-terminus: Protein GrpE (191 aa).

This sequence belongs to the GrpE family. In terms of assembly, homodimer.

Its subcellular location is the cytoplasm. In terms of biological role, participates actively in the response to hyperosmotic and heat shock by preventing the aggregation of stress-denatured proteins, in association with DnaK and GrpE. It is the nucleotide exchange factor for DnaK and may function as a thermosensor. Unfolded proteins bind initially to DnaJ; upon interaction with the DnaJ-bound protein, DnaK hydrolyzes its bound ATP, resulting in the formation of a stable complex. GrpE releases ADP from DnaK; ATP binding to DnaK triggers the release of the substrate protein, thus completing the reaction cycle. Several rounds of ATP-dependent interactions between DnaJ, DnaK and GrpE are required for fully efficient folding. The protein is Protein GrpE of Listeria monocytogenes serotype 4b (strain CLIP80459).